We begin with the raw amino-acid sequence, 272 residues long: HMP-PP phosphatase (272 aa).

Asp-8 functions as the Nucleophile in the catalytic mechanism. Mg(2+) is bound by residues Asp-8, Asp-10, and Asp-212.

This sequence belongs to the HAD-like hydrolase superfamily. Cof family. Mg(2+) is required as a cofactor.

It catalyses the reaction 4-amino-2-methyl-5-(diphosphooxymethyl)pyrimidine + H2O = 4-amino-2-methyl-5-(phosphooxymethyl)pyrimidine + phosphate + H(+). Catalyzes the hydrolysis of 4-amino-2-methyl-5-hydroxymethylpyrimidine pyrophosphate (HMP-PP) to 4-amino-2-methyl-5-hydroxymethylpyrimidine phosphate (HMP-P). The protein is HMP-PP phosphatase of Citrobacter koseri (strain ATCC BAA-895 / CDC 4225-83 / SGSC4696).